A 136-amino-acid polypeptide reads, in one-letter code: Phospholipase A2 (136 aa).

Trp8, Gly10, and Gly12 together coordinate Ca(2+). 5 disulfides stabilise this stretch: Cys9–Cys31, Cys30–Cys70, Cys37–Cys63, Cys61–Cys95, and Cys105–Cys115. A glycan (N-linked (GlcNAc...) asparagine) is linked at Asn16. His34 is an active-site residue. Asp35 is a binding site for Ca(2+). Residue Asp64 is part of the active site.

It belongs to the phospholipase A2 family. Requires Ca(2+) as cofactor. As to expression, expressed by the venom gland.

It is found in the secreted. It catalyses the reaction a 1,2-diacyl-sn-glycero-3-phosphocholine + H2O = a 1-acyl-sn-glycero-3-phosphocholine + a fatty acid + H(+). Its function is as follows. PLA2 catalyzes the calcium-dependent hydrolysis of the 2-acyl groups in 3-sn-phosphoglycerides. The sequence is that of Phospholipase A2 from Bombus pensylvanicus (American bumblebee).